Reading from the N-terminus, the 283-residue chain is Acyl-coenzyme A diphosphatase FITM2 (283 aa).

The segment covering 1–11 (MSTRRSSTRAD) has biased composition (low complexity). The disordered stretch occupies residues 1-21 (MSTRRSSTRADSTTKRPASPN). The Cytoplasmic segment spans residues 1–39 (MSTRRSSTRADSTTKRPASPNSTPNAALGIFVAIARQIL). A helical membrane pass occupies residues 40–60 (FIDARKVALFYLAFVTVLSFI). Residues 61–81 (ESRIELDSTYYLVQKHSVLNQ) are Lumenal-facing. Residues 82 to 102 (YGVKMGWFWTLVIVGPFIWFS) traverse the membrane as a helical segment. At 103 to 120 (SKAHNRRDRDQPIVDVCR) the chain is on the cytoplasmic side. Residues 121–141 (LGVGTACWYFSVQFFHKVLAL) form a helical membrane-spanning segment. Over 142–168 (TSMCDKGRTLTRAQCSEKEGVWTPGYD) the chain is Lumenal. Residues 169–189 (ISGHCFLMIYSILIITEEAIA) traverse the membrane as a helical segment. His172 is an active-site residue. Topologically, residues 190 to 219 (YRHYQQVTDAVHQMDGDREEHDRLTRCIQY) are cytoplasmic. A run of 2 helical transmembrane segments spans residues 220–240 (FFVAMLFLHAFWFKQIIISVL) and 241–261 (YYHIFIEEILGAVAAVVCWFV). The active site involves His243. The Cytoplasmic segment spans residues 262–283 (TYRMLYPAGFLASPIRRTVGRK).

This sequence belongs to the FIT family. FIT2 subfamily.

The protein localises to the endoplasmic reticulum membrane. It catalyses the reaction an acyl-CoA + H2O = an acyl-4'-phosphopantetheine + adenosine 3',5'-bisphosphate + 2 H(+). Fatty acyl-coenzyme A (CoA) diphosphatase that hydrolyzes fatty acyl-CoA to yield acyl-4'-phosphopantetheine and adenosine 3',5'-bisphosphate. Preferentially hydrolyzes unsaturated long-chain acyl-CoA substrates in the endoplasmic reticulum (ER) lumen. This catalytic activity is required for maintaining ER structure and for lipid droplets (LDs) biogenesis, which are lipid storage organelles involved in maintaining lipid and energy homeostasis. May directly bind to diacylglycerol (DAGs) and triacylglycerol, which is also important for LD biogenesis. May support directional budding of nacent LDs from the ER into the cytosol by reducing DAG levels at sites of LD formation. May play a role in the regulation of cell morphology, ER morphology and cytoskeletal organization. The polypeptide is Acyl-coenzyme A diphosphatase FITM2 (Caenorhabditis elegans).